A 216-amino-acid polypeptide reads, in one-letter code: Probable transaldolase (216 aa).

The Schiff-base intermediate with substrate role is filled by lysine 83.

It belongs to the transaldolase family. Type 3B subfamily.

It localises to the cytoplasm. The enzyme catalyses D-sedoheptulose 7-phosphate + D-glyceraldehyde 3-phosphate = D-erythrose 4-phosphate + beta-D-fructose 6-phosphate. Its pathway is carbohydrate degradation; pentose phosphate pathway; D-glyceraldehyde 3-phosphate and beta-D-fructose 6-phosphate from D-ribose 5-phosphate and D-xylulose 5-phosphate (non-oxidative stage): step 2/3. Its function is as follows. Transaldolase is important for the balance of metabolites in the pentose-phosphate pathway. The chain is Probable transaldolase from Thermoanaerobacter sp. (strain X514).